The following is a 200-amino-acid chain: Troponin I-like protein (200 aa).

2 disordered regions span residues 1–20 (MGDEEKRKMEEKERKKAEVR) and 181–200 (ENKADKKPEWALGSKKENEE). Positions 2 to 116 (GDEEKRKMEE…EDAKYDLEYE (115 aa)) form a coiled coil.

It belongs to the troponin I family. As to expression, expressed in salivary gland, gut, muscle and cuticle (at protein level).

Its function is as follows. Inhibits endothelial cell proliferation and angiogenesis in a vertebrate host. Probably required for efficient blood feeding on vertebrate hosts. The sequence is that of Troponin I-like protein from Haemaphysalis longicornis (Bush tick).